A 410-amino-acid polypeptide reads, in one-letter code: Transforming growth factor beta-3 proprotein (410 aa).

Positions 1-23 are cleaved as a signal peptide; it reads MHLQRALVVLALLNLATISLSLS. 3 N-linked (GlcNAc...) asparagine glycosylation sites follow: asparagine 72, asparagine 133, and asparagine 140. The Cell attachment site signature appears at 259-261; that stretch reads RGD. At glutamine 291 the chain carries N5-methylglutamine. Disulfide bonds link cysteine 305–cysteine 314, cysteine 313–cysteine 376, cysteine 342–cysteine 407, and cysteine 346–cysteine 409.

Belongs to the TGF-beta family. In terms of assembly, interacts with ASPN. Latency-associated peptide: Homodimer; disulfide-linked. Latency-associated peptide: Interacts with Transforming growth factor beta-3 (TGF-beta-3) chain; interaction is non-covalent and maintains (TGF-beta-3) in a latent state. Latency-associated peptide: Interacts with LRRC32/GARP; leading to regulate activation of TGF-beta-3 and promote epithelial fusion during palate development. Latency-associated peptide: Interacts (via cell attachment site) with integrins, leading to release of the active TGF-beta-3. Transforming growth factor beta-3: Homodimer; disulfide-linked. Transforming growth factor beta-3: Interacts with TGF-beta receptors (TGFBR1 and TGFBR2), leading to signal transduction. Transforming growth factor beta-3 proprotein: The precursor proprotein is cleaved in the Golgi apparatus to form Transforming growth factor beta-3 (TGF-beta-3) and Latency-associated peptide (LAP) chains, which remain non-covalently linked, rendering TGF-beta-3 inactive. Post-translationally, methylated at Gln-291 by N6AMT1. Expressed in mammary glands with a slight increase in expression prior to lactation and again increasing at the onset of involution, expression peaks at day 3 of involution.

It localises to the secreted. The protein resides in the extracellular space. Its subcellular location is the extracellular matrix. In terms of biological role, transforming growth factor beta-3 proprotein: Precursor of the Latency-associated peptide (LAP) and Transforming growth factor beta-3 (TGF-beta-3) chains, which constitute the regulatory and active subunit of TGF-beta-3, respectively. Its function is as follows. Required to maintain the Transforming growth factor beta-3 (TGF-beta-3) chain in a latent state during storage in extracellular matrix. Associates non-covalently with TGF-beta-3 and regulates its activation via interaction with 'milieu molecules', such as LTBP1 and LRRC32/GARP, that control activation of TGF-beta-3. Interaction with integrins results in distortion of the Latency-associated peptide chain and subsequent release of the active TGF-beta-3. Transforming growth factor beta-3: Multifunctional protein that regulates embryogenesis and cell differentiation and is required in various processes such as secondary palate development. Activation into mature form follows different steps: following cleavage of the proprotein in the Golgi apparatus, Latency-associated peptide (LAP) and Transforming growth factor beta-3 (TGF-beta-3) chains remain non-covalently linked rendering TGF-beta-3 inactive during storage in extracellular matrix. At the same time, LAP chain interacts with 'milieu molecules', such as LTBP1 and LRRC32/GARP that control activation of TGF-beta-3 and maintain it in a latent state during storage in extracellular milieus. TGF-beta-3 is released from LAP by integrins: integrin-binding results in distortion of the LAP chain and subsequent release of the active TGF-beta-3. Once activated following release of LAP, TGF-beta-3 acts by binding to TGF-beta receptors (TGFBR1 and TGFBR2), which transduce signal. The chain is Transforming growth factor beta-3 proprotein from Mus musculus (Mouse).